The following is a 364-amino-acid chain: Esculetin O-methyltransferase (364 aa).

Asparagine 132 is a binding site for bergaptol. Residues glycine 209, aspartate 232, aspartate 252, methionine 253, methionine 265, and lysine 266 each contribute to the S-adenosyl-L-homocysteine site. Histidine 270 provides a ligand contact to bergaptol. Histidine 270 (proton acceptor) is an active-site residue.

This sequence belongs to the class I-like SAM-binding methyltransferase superfamily. Cation-independent O-methyltransferase family. COMT subfamily. As to quaternary structure, homodimer. Expressed ubiquitously.

It catalyses the reaction bergaptol + S-adenosyl-L-methionine = bergapten + S-adenosyl-L-homocysteine. The enzyme catalyses xanthotoxol + S-adenosyl-L-methionine = xanthotoxin + S-adenosyl-L-homocysteine + H(+). It carries out the reaction esculetin + S-adenosyl-L-methionine = isoscopoletin + S-adenosyl-L-homocysteine + H(+). The catalysed reaction is esculetin + S-adenosyl-L-methionine = scopoletin + S-adenosyl-L-homocysteine + H(+). It functions in the pathway aromatic compound metabolism. The protein operates within secondary metabolite biosynthesis. With respect to regulation, inhibited by zinc Zn(2+), copper Cu(2+) and silver Ag(+) ions. O-methyltransferase involved in the biosynthesis of methoxylated coumarins natural products such as isoscopoletin, scopoletin, xanthotoxin and bergapten, photosensitizers used for medical purpose such as treating psoriasis and vitiligo or facilitating resistance to microbial infection and other stresses. Catalyzes the methylation of esculetin, bergaptol and xanthotoxol, but seems inactive on scopoletin and isoscopoletin. This is Esculetin O-methyltransferase from Kitagawia praeruptora (Peucedanum praeruptorum).